A 367-amino-acid chain; its full sequence is Anthranilate phosphoribosyltransferase (367 aa).

Over residues 1-21 (MALSSESSAASAARRPSGGPA) the composition is skewed to low complexity. The tract at residues 1 to 24 (MALSSESSAASAARRPSGGPATSW) is disordered. 5-phospho-alpha-D-ribose 1-diphosphate contacts are provided by residues glycine 104, 107–108 (GD), threonine 112, 114–117 (NLST), 132–140 (KHGNRAASS), and glycine 144. Glycine 104 contacts anthranilate. Serine 116 serves as a coordination point for Mg(2+). Anthranilate is bound at residue asparagine 135. An anthranilate-binding site is contributed by arginine 190. 2 residues coordinate Mg(2+): aspartate 248 and glutamate 249.

The protein belongs to the anthranilate phosphoribosyltransferase family. In terms of assembly, homodimer. Mg(2+) serves as cofactor.

It catalyses the reaction N-(5-phospho-beta-D-ribosyl)anthranilate + diphosphate = 5-phospho-alpha-D-ribose 1-diphosphate + anthranilate. The protein operates within amino-acid biosynthesis; L-tryptophan biosynthesis; L-tryptophan from chorismate: step 2/5. Functionally, catalyzes the transfer of the phosphoribosyl group of 5-phosphorylribose-1-pyrophosphate (PRPP) to anthranilate to yield N-(5'-phosphoribosyl)-anthranilate (PRA). The sequence is that of Anthranilate phosphoribosyltransferase from Mycolicibacterium paratuberculosis (strain ATCC BAA-968 / K-10) (Mycobacterium paratuberculosis).